We begin with the raw amino-acid sequence, 70 residues long: SPbeta prophage-derived uncharacterized protein YotJ (70 aa).

This Bacillus subtilis (strain 168) protein is SPbeta prophage-derived uncharacterized protein YotJ (yotJ).